A 1409-amino-acid chain; its full sequence is Receptor-type tyrosine-protein phosphatase (1409 aa).

The first 22 residues, 1 to 22, serve as a signal peptide directing secretion; the sequence is MRINRWIWWATVILLYLRTGLA. Topologically, residues 23–712 are extracellular; the sequence is ADFFRSSEEN…LLDTESSSSG (690 aa). A disordered region spans residues 32-53; it reads NDRKSSDDLDNFNSTKIEPDKP. Positions 159-267 constitute an Ig-like C2-type domain; that stretch reads PTKCDKRDLA…TASASDLDVT (109 aa). The cysteines at positions 189 and 255 are disulfide-linked. Fibronectin type-III domains follow at residues 276–366 and 372–502; these read APRQ…TKQK and KEED…AQPD. The helical transmembrane segment at 713–733 threads the bilayer; it reads FGIFMKIILPFLLFLAFATGV. Over 734–1409 the chain is Cytoplasmic; that stretch reads TMFFVNRKGH…LADYISKTYR (676 aa). 2 Tyrosine-protein phosphatase domains span residues 793 to 1072 and 1135 to 1403; these read FAQE…LAEW and LEEE…LADY. Residues Cys1013 and Cys1344 each act as phosphocysteine intermediate in the active site.

The protein belongs to the protein-tyrosine phosphatase family. Receptor class 2A subfamily. In terms of tissue distribution, expressed in muscles, hypodermis and a subset of neurons. Expressed in the AVA neurons, with high expression in the anterior half of the preanal ganglion where AVA neurons contact the PHB neurons.

It is found in the cell membrane. It localises to the synapse. It carries out the reaction O-phospho-L-tyrosyl-[protein] + H2O = L-tyrosyl-[protein] + phosphate. Its function is as follows. Possesses an intrinsic protein tyrosine phosphatase (PTPase) activity. Regulates egl-15 activity which is required for hypodermis-mediated fluid homeostasis and protein degradation in muscle. During the formation of neuromuscular junctions at the larval stage, negatively regulates membrane protrusion from body wall muscles. Plays a role in nicotinic acetylcholine receptor (nAChR)-mediated sensitivity to nicotine. Regulates synaptic levels of nAchR subunit lev-1 in the nerve cord. Promotes the outgrowth of the quaternary dendritic branches of the PVD sensory neurons. In parallel to the sax-7/mnr-1 pathway, also controls the extension of the PVD primary branches. Acts in the netrin/DCC pathway to mediate the formation of synapses between the AVA interneurons and the PHB sensory neurons. Also required for the formation of synapses between the AVA interneurons and the VA10 motor neurons. This is Receptor-type tyrosine-protein phosphatase from Caenorhabditis elegans.